A 342-amino-acid polypeptide reads, in one-letter code: Holliday junction branch migration complex subunit RuvB (342 aa).

Residues 1-185 (MTVKPLRDVT…FPIQERLEYY (185 aa)) form a large ATPase domain (RuvB-L) region. ATP-binding positions include Leu-24, Arg-25, Gly-66, Lys-69, Thr-70, Ser-71, 132-134 (EDY), Arg-175, Tyr-185, and Arg-222. Thr-70 lines the Mg(2+) pocket. Positions 186-256 (GPAELKEIAV…VVDRTLRRLE (71 aa)) are small ATPAse domain (RuvB-S). The tract at residues 259–342 (ARGLDAMDRR…RSGGKQGSLV (84 aa)) is head domain (RuvB-H). 2 residues coordinate DNA: Arg-314 and Arg-319.

This sequence belongs to the RuvB family. In terms of assembly, homohexamer. Forms an RuvA(8)-RuvB(12)-Holliday junction (HJ) complex. HJ DNA is sandwiched between 2 RuvA tetramers; dsDNA enters through RuvA and exits via RuvB. An RuvB hexamer assembles on each DNA strand where it exits the tetramer. Each RuvB hexamer is contacted by two RuvA subunits (via domain III) on 2 adjacent RuvB subunits; this complex drives branch migration. In the full resolvosome a probable DNA-RuvA(4)-RuvB(12)-RuvC(2) complex forms which resolves the HJ.

It is found in the cytoplasm. It catalyses the reaction ATP + H2O = ADP + phosphate + H(+). In terms of biological role, the RuvA-RuvB-RuvC complex processes Holliday junction (HJ) DNA during genetic recombination and DNA repair, while the RuvA-RuvB complex plays an important role in the rescue of blocked DNA replication forks via replication fork reversal (RFR). RuvA specifically binds to HJ cruciform DNA, conferring on it an open structure. The RuvB hexamer acts as an ATP-dependent pump, pulling dsDNA into and through the RuvAB complex. RuvB forms 2 homohexamers on either side of HJ DNA bound by 1 or 2 RuvA tetramers; 4 subunits per hexamer contact DNA at a time. Coordinated motions by a converter formed by DNA-disengaged RuvB subunits stimulates ATP hydrolysis and nucleotide exchange. Immobilization of the converter enables RuvB to convert the ATP-contained energy into a lever motion, pulling 2 nucleotides of DNA out of the RuvA tetramer per ATP hydrolyzed, thus driving DNA branch migration. The RuvB motors rotate together with the DNA substrate, which together with the progressing nucleotide cycle form the mechanistic basis for DNA recombination by continuous HJ branch migration. Branch migration allows RuvC to scan DNA until it finds its consensus sequence, where it cleaves and resolves cruciform DNA. The protein is Holliday junction branch migration complex subunit RuvB of Anaeromyxobacter dehalogenans (strain 2CP-C).